A 320-amino-acid chain; its full sequence is Cytochrome f (320 aa).

The N-terminal stretch at 1 to 35 is a signal peptide; sequence MQTRKTFSWIKEQINRSISVSLMIYIITRPSISIA. Tyrosine 36, cysteine 56, cysteine 59, and histidine 60 together coordinate heme. The helical transmembrane segment at 286 to 306 threads the bilayer; it reads VQGLLFFLASVILAQIFLVLK.

Belongs to the cytochrome f family. The 4 large subunits of the cytochrome b6-f complex are cytochrome b6, subunit IV (17 kDa polypeptide, petD), cytochrome f and the Rieske protein, while the 4 small subunits are PetG, PetL, PetM and PetN. The complex functions as a dimer. Heme serves as cofactor.

The protein localises to the plastid. It localises to the chloroplast thylakoid membrane. Its function is as follows. Component of the cytochrome b6-f complex, which mediates electron transfer between photosystem II (PSII) and photosystem I (PSI), cyclic electron flow around PSI, and state transitions. The protein is Cytochrome f of Daucus carota (Wild carrot).